The sequence spans 132 residues: Small ribosomal subunit protein uS8 (132 aa).

The protein belongs to the universal ribosomal protein uS8 family. As to quaternary structure, part of the 30S ribosomal subunit. Contacts proteins S5 and S12.

In terms of biological role, one of the primary rRNA binding proteins, it binds directly to 16S rRNA central domain where it helps coordinate assembly of the platform of the 30S subunit. The sequence is that of Small ribosomal subunit protein uS8 from Natranaerobius thermophilus (strain ATCC BAA-1301 / DSM 18059 / JW/NM-WN-LF).